Consider the following 3589-residue polypeptide: D-lysergyl-peptide-synthetase subunit 1 (3589 aa).

An adenylation (A) domain 1 region spans residues 344–742; sequence NCHSRPDSLA…IGRKDLQVKV (399 aa). The region spanning 883-952 is the Carrier 1 domain; it reads VERRLQLLFA…KLRDLAAASS (70 aa). O-(pantetheine 4'-phosphoryl)serine is present on Ser-915. A condensation (C) domain 1 region spans residues 995-1380; sequence EDIYPCTSLQ…SQFQHILTQI (386 aa). Residues 1424 to 1826 form an adenylation (A) domain 2 region; it reads QAKAQMQPEA…RRKDSQVKLR (403 aa). Positions 1974–2042 constitute a Carrier 2 domain; the sequence is LERELQKIWA…TIEKLAAAAV (69 aa). Ser-2006 is subject to O-(pantetheine 4'-phosphoryl)serine. Residues 2087–2509 form a condensation (C) domain 2 region; sequence VEDIYPCSPI…IEMLDEEHRS (423 aa). An adenylation (A) domain 3 region spans residues 2534-2929; that stretch reads CLESPESPAI…GRKDDQVKIR (396 aa). Positions 3064 to 3132 constitute a Carrier 3 domain; sequence LETRLQELVG…RLSELAVVLN (69 aa). Ser-3096 is subject to O-(pantetheine 4'-phosphoryl)serine. The tract at residues 3187–3585 is cyclization (Cyc) domain; that stretch reads TNFIALHFSQ…TYPESLVSEL (399 aa).

Belongs to the NRP synthetase family.

The protein operates within alkaloid biosynthesis; ergot alkaloid biosynthesis. In terms of biological role, D-lysergyl-peptide-synthetase subunit 1; part of the gene cluster that mediates the biosynthesis of fungal ergot alkaloid ergovaline, the predominant ergopeptine product in E.festucae var. lolii. DmaW catalyzes the first step of ergot alkaloid biosynthesis by condensing dimethylallyl diphosphate (DMAP) and tryptophan to form 4-dimethylallyl-L-tryptophan. The second step is catalyzed by the methyltransferase easF that methylates 4-dimethylallyl-L-tryptophan in the presence of S-adenosyl-L-methionine, resulting in the formation of 4-dimethylallyl-L-abrine. The catalase easC and the FAD-dependent oxidoreductase easE then transform 4-dimethylallyl-L-abrine to chanoclavine-I which is further oxidized by easD in the presence of NAD(+), resulting in the formation of chanoclavine-I aldehyde. Agroclavine dehydrogenase easG then mediates the conversion of chanoclavine-I aldehyde to agroclavine via a non-enzymatic adduct reaction: the substrate is an iminium intermediate that is formed spontaneously from chanoclavine-I aldehyde in the presence of glutathione. The presence of easA is not required to complete this reaction. Further conversion of agroclavine to paspalic acid is a two-step process involving oxidation of agroclavine to elymoclavine and of elymoclavine to paspalic acid, the second step being performed by the elymoclavine oxidase cloA. Paspalic acid is then further converted to D-lysergic acid. Ergovaline is assembled from D-lysergic acid and three different amino acids by the D-lysergyl-peptide-synthetase composed of a monomudular (lpsB) and a trimodular (lpsA) nonribosomal peptide synthetase subunit. The protein is D-lysergyl-peptide-synthetase subunit 1 of Epichloe festucae var. lolii (Neotyphodium lolii).